The primary structure comprises 284 residues: Protoheme IX farnesyltransferase (284 aa).

The next 9 helical transmembrane spans lie at 13–33, 35–55, 84–104, 106–126, 134–154, 163–183, 205–225, 229–249, and 264–284; these read VTVL…TGYP, LTVI…SFIL, FALL…TYFI, LLTA…YTIW, NIVI…AAMA, VMFL…AIFL, VNQI…FYFV, MGYL…GFAY, and FFFS…DSKI.

The protein belongs to the UbiA prenyltransferase family. Protoheme IX farnesyltransferase subfamily.

Its subcellular location is the cell inner membrane. It carries out the reaction heme b + (2E,6E)-farnesyl diphosphate + H2O = Fe(II)-heme o + diphosphate. It functions in the pathway porphyrin-containing compound metabolism; heme O biosynthesis; heme O from protoheme: step 1/1. In terms of biological role, converts heme B (protoheme IX) to heme O by substitution of the vinyl group on carbon 2 of heme B porphyrin ring with a hydroxyethyl farnesyl side group. This Leptospira biflexa serovar Patoc (strain Patoc 1 / Ames) protein is Protoheme IX farnesyltransferase.